Reading from the N-terminus, the 314-residue chain is ATP synthase gamma chain (314 aa).

Belongs to the ATPase gamma chain family. In terms of assembly, F-type ATPases have 2 components, CF(1) - the catalytic core - and CF(0) - the membrane proton channel. CF(1) has five subunits: alpha(3), beta(3), gamma(1), delta(1), epsilon(1). CF(0) has three main subunits: a, b and c.

The protein resides in the cell membrane. Functionally, produces ATP from ADP in the presence of a proton gradient across the membrane. The gamma chain is believed to be important in regulating ATPase activity and the flow of protons through the CF(0) complex. The sequence is that of ATP synthase gamma chain from Cutibacterium acnes (strain DSM 16379 / KPA171202) (Propionibacterium acnes).